The primary structure comprises 494 residues: BUB3-interacting and GLEBS motif-containing protein ZNF207 (494 aa).

The microtubule-binding region stretch occupies residues 1–92 (MGRKKKKQLK…EGIPEKDMDE (92 aa)). C2H2-type zinc fingers lie at residues 11–34 (PWCW…KAKH) and 35–58 (FKCH…MQVH). Residues 100–111 (KTQESQKKKQQD) are compositionally biased toward basic and acidic residues. Disordered regions lie at residues 100–161 (KTQE…PGIP), 250–377 (NRPP…SATS), and 455–494 (LPGA…GGRY). The segment covering 112–121 (DSDEYDDDDS) has biased composition (acidic residues). The span at 127–136 (FQPQPVQPQQ) shows a compositional bias: polar residues. Positions 142–161 (MAQPGLPPVPGAPGMPPGIP) are enriched in pro residues. Over residues 283–300 (SSSTASSNSESLSASSKA) the composition is skewed to low complexity. Residues 323-332 (LNSTPATSTE) are compositionally biased toward polar residues. Residues 342–377 (TQSTASTTSTTNSTAAKPAASITSKPATLTTTSATS) show a composition bias toward low complexity. The interval 375 to 407 (ATSKLIHPDEDISLEERRAQLPKYQRNLPRPGQ) is GLEBS. The segment covering 463–483 (GQGPPMVPPYQGGPPRPPMGM) has biased composition (pro residues).

In terms of assembly, interacts (via GLEBS region) with BUB3.

It localises to the nucleus. Its subcellular location is the chromosome. The protein localises to the centromere. The protein resides in the kinetochore. It is found in the cytoplasm. It localises to the cytoskeleton. Its subcellular location is the spindle. Kinetochore- and microtubule-binding protein that plays a key role in spindle assembly. ZNF207/BuGZ is mainly composed of disordered low-complexity regions and undergoes phase transition or coacervation to form temperature-dependent liquid droplets. Coacervation promotes microtubule bundling and concentrates tubulin, promoting microtubule polymerization and assembly of spindle and spindle matrix by concentrating its building blocks. Also acts as a regulator of mitotic chromosome alignment by mediating the stability and kinetochore loading of BUB3. Mechanisms by which BUB3 is protected are unclear: according to a first report, ZNF207/BuGZ may act by blocking ubiquitination and proteasomal degradation of BUB3. According to another report, the stabilization is independent of the proteasome. The polypeptide is BUB3-interacting and GLEBS motif-containing protein ZNF207 (Pongo abelii (Sumatran orangutan)).